We begin with the raw amino-acid sequence, 154 residues long: Ribonuclease 8 (154 aa).

An N-terminal signal peptide occupies residues 1–27; sequence MAPARAGCCALLLLLLGLWVAEIPVSA. The active-site Proton acceptor is His-42. Disulfide bonds link Cys-64–Cys-118, Cys-82–Cys-133, and Cys-89–Cys-96. Substrate is bound by residues 65–69 and Lys-90; that span reads KDLNT. Catalysis depends on His-149, which acts as the Proton donor.

The protein belongs to the pancreatic ribonuclease family.

Its subcellular location is the secreted. Has a low ribonuclease activity. In Pongo pygmaeus (Bornean orangutan), this protein is Ribonuclease 8 (RNASE8).